Consider the following 292-residue polypeptide: Succinate dehydrogenase assembly factor 2, mitochondrial (292 aa).

Disordered regions lie at residues 27–68 and 266–292; these read RSFG…NTTS and TGFH…VFDS. A compositionally biased stretch (polar residues) spans 55-68; sequence TNRPPNQHVPNTTS.

It belongs to the SDHAF2 family. In terms of assembly, interacts with the flavoprotein subunit within the SDH catalytic dimer.

It localises to the mitochondrion matrix. Its function is as follows. Plays an essential role in the assembly of succinate dehydrogenase (SDH), an enzyme complex (also referred to as respiratory complex II) that is a component of both the tricarboxylic acid (TCA) cycle and the mitochondrial electron transport chain, and which couples the oxidation of succinate to fumarate with the reduction of ubiquinone (coenzyme Q) to ubiquinol. Required for flavinylation (covalent attachment of FAD) of the flavoprotein subunit of the SDH catalytic dimer. The polypeptide is Succinate dehydrogenase assembly factor 2, mitochondrial (Aspergillus flavus (strain ATCC 200026 / FGSC A1120 / IAM 13836 / NRRL 3357 / JCM 12722 / SRRC 167)).